A 172-amino-acid chain; its full sequence is NADH-quinone oxidoreductase subunit B 1 (172 aa).

[4Fe-4S] cluster is bound by residues C42, C43, C107, and C137.

The protein belongs to the complex I 20 kDa subunit family. In terms of assembly, NDH-1 is composed of 14 different subunits. Subunits NuoB, C, D, E, F, and G constitute the peripheral sector of the complex. [4Fe-4S] cluster serves as cofactor.

It is found in the cell inner membrane. The enzyme catalyses a quinone + NADH + 5 H(+)(in) = a quinol + NAD(+) + 4 H(+)(out). Its function is as follows. NDH-1 shuttles electrons from NADH, via FMN and iron-sulfur (Fe-S) centers, to quinones in the respiratory chain. Couples the redox reaction to proton translocation (for every two electrons transferred, four hydrogen ions are translocated across the cytoplasmic membrane), and thus conserves the redox energy in a proton gradient. This is NADH-quinone oxidoreductase subunit B 1 from Anaeromyxobacter sp. (strain Fw109-5).